Reading from the N-terminus, the 150-residue chain is Large ribosomal subunit protein bL9 (150 aa).

It belongs to the bacterial ribosomal protein bL9 family.

In terms of biological role, binds to the 23S rRNA. The chain is Large ribosomal subunit protein bL9 from Burkholderia ambifaria (strain MC40-6).